The sequence spans 148 residues: Putative nickel-responsive regulator (148 aa).

Positions 76, 87, 89, and 95 each coordinate Ni(2+).

It belongs to the transcriptional regulatory CopG/NikR family. Ni(2+) serves as cofactor.

Its function is as follows. Transcriptional regulator. This chain is Putative nickel-responsive regulator, found in Rhodopseudomonas palustris (strain ATCC BAA-98 / CGA009).